The sequence spans 274 residues: Probable lipoprotein peptidase YaeF (274 aa).

The N-terminal stretch at 1-20 is a signal peptide; the sequence is MDKPKAYCRLFLPSFLLLSA. Cys21 is lipidated: N-palmitoyl cysteine. A lipid anchor (S-diacylglycerol cysteine) is attached at Cys21. The active-site Nucleophile is Cys207. The active-site Proton acceptor is His257.

The protein resides in the cell inner membrane. The polypeptide is Probable lipoprotein peptidase YaeF (yaeF) (Escherichia coli (strain K12)).